Reading from the N-terminus, the 61-residue chain is Small ribosomal subunit protein uS14 (61 aa).

The Zn(2+) site is built by Cys24, Cys27, Cys40, and Cys43.

The protein belongs to the universal ribosomal protein uS14 family. Zinc-binding uS14 subfamily. Part of the 30S ribosomal subunit. Contacts proteins S3 and S10. Zn(2+) is required as a cofactor.

Its function is as follows. Binds 16S rRNA, required for the assembly of 30S particles and may also be responsible for determining the conformation of the 16S rRNA at the A site. This is Small ribosomal subunit protein uS14 from Clostridium botulinum (strain Alaska E43 / Type E3).